A 216-amino-acid chain; its full sequence is Probable flavin-dependent thymidylate synthase (216 aa).

The ThyX domain occupies 1-216; it reads MSAKLISVTK…PSIAKALDWV (216 aa). FAD is bound by residues Ser-55, 78-80, and Glu-86; that span reads RHR. Residues 75–78, 86–90, and Arg-155 contribute to the dUMP site; these read QVLR and EFSQR. The ThyX motif motif lies at 78–88; it reads RHRSFHFQEFS. His-177 lines the FAD pocket. Residue Arg-182 participates in dUMP binding. The active-site Involved in ionization of N3 of dUMP, leading to its activation is the Arg-182.

Belongs to the thymidylate synthase ThyX family. In terms of assembly, homotetramer. The cofactor is FAD.

It catalyses the reaction dUMP + (6R)-5,10-methylene-5,6,7,8-tetrahydrofolate + NADPH + H(+) = dTMP + (6S)-5,6,7,8-tetrahydrofolate + NADP(+). It participates in pyrimidine metabolism; dTTP biosynthesis. In terms of biological role, catalyzes the reductive methylation of 2'-deoxyuridine-5'-monophosphate (dUMP) to 2'-deoxythymidine-5'-monophosphate (dTMP) while utilizing 5,10-methylenetetrahydrofolate (mTHF) as the methyl donor, and NADPH and FADH(2) as the reductant. In Paramecium bursaria Chlorella virus 1 (PBCV-1), this protein is Probable flavin-dependent thymidylate synthase.